Here is a 376-residue protein sequence, read N- to C-terminus: Alcohol dehydrogenase 6 (376 aa).

Zn(2+) is bound by residues cysteine 47, histidine 69, cysteine 99, cysteine 102, cysteine 105, cysteine 113, and cysteine 175. Residues 200–205 (GLGGVG), aspartate 224, arginine 229, 293–295 (VGA), and arginine 371 each bind NAD(+).

It belongs to the zinc-containing alcohol dehydrogenase family. Class-V subfamily. Dimer. Requires Zn(2+) as cofactor.

It localises to the cytoplasm. It catalyses the reaction a primary alcohol + NAD(+) = an aldehyde + NADH + H(+). The enzyme catalyses a secondary alcohol + NAD(+) = a ketone + NADH + H(+). In terms of biological role, alcohol dehydrogenase. Catalyzes the NAD-dependent oxidation of primary alcohols to the corresponding aldehydes. Oxidizes secondary alcohols to the corresponding ketones. The protein is Alcohol dehydrogenase 6 (Adh6) of Rattus norvegicus (Rat).